Reading from the N-terminus, the 2020-residue chain is Metacaspase-2 (2020 aa).

Basic and acidic residues-rich tracts occupy residues 51–60 (SENDRNESIQ) and 69–78 (DNRKTNKSEK). 2 disordered regions span residues 51–78 (SEND…KSEK) and 573–614 (RNGN…NINN). Positions 576 to 614 (NINNNKNNNINNNNNNINNNNNNINNNNNNINNNNNINN) are enriched in low complexity.

It belongs to the peptidase C14B family.

It localises to the cytoplasm. With respect to regulation, ca(2+) does not appear to affect catalytic activity. In terms of biological role, protease that cleaves specifically after arginine or lysine residues. May play a role in parasite growth and/or development. This chain is Metacaspase-2, found in Plasmodium falciparum (isolate 3D7).